The primary structure comprises 155 residues: DNA gyrase inhibitor (155 aa).

This sequence belongs to the DNA gyrase inhibitor family. Interacts with DNA gyrase.

The protein localises to the cytoplasm. In terms of biological role, inhibits the supercoiling activity of DNA gyrase. Acts by inhibiting DNA gyrase at an early step, prior to (or at the step of) binding of DNA by the gyrase. It protects cells against toxins that target DNA gyrase, by inhibiting activity of these toxins and reducing the formation of lethal double-strand breaks in the cell. The chain is DNA gyrase inhibitor from Escherichia fergusonii (strain ATCC 35469 / DSM 13698 / CCUG 18766 / IAM 14443 / JCM 21226 / LMG 7866 / NBRC 102419 / NCTC 12128 / CDC 0568-73).